A 160-amino-acid chain; its full sequence is MSKFTHINEQGNAKMVDVSNKNITKRTAQAHSSITVNETIYQQIIDNTNKKGNVLNTAQIAGIMAAKNTSTIIPMCHPLPLTGIDVQFNWQINDNTTYTLNITAIVSTTGKTGVEMEALTAASATALTVYDMTKAVDKGMIIGETYLESKSGGKSGDYRR.

Residues 75-77 (MCH) and 116-117 (ME) each bind substrate. The active site involves Asp131.

Belongs to the MoaC family. In terms of assembly, homohexamer; trimer of dimers.

The enzyme catalyses (8S)-3',8-cyclo-7,8-dihydroguanosine 5'-triphosphate = cyclic pyranopterin phosphate + diphosphate. It participates in cofactor biosynthesis; molybdopterin biosynthesis. In terms of biological role, catalyzes the conversion of (8S)-3',8-cyclo-7,8-dihydroguanosine 5'-triphosphate to cyclic pyranopterin monophosphate (cPMP). In Staphylococcus haemolyticus (strain JCSC1435), this protein is Cyclic pyranopterin monophosphate synthase.